The sequence spans 688 residues: Elongation factor G (688 aa).

Residues 8-282 enclose the tr-type G domain; that stretch reads DKFRNFGIMA…GVVDYLPSPL (275 aa). GTP-binding positions include 17–24, 81–85, and 135–138; these read AHIDAGKT, DTPGH, and NKMD.

The protein belongs to the TRAFAC class translation factor GTPase superfamily. Classic translation factor GTPase family. EF-G/EF-2 subfamily.

The protein resides in the cytoplasm. Functionally, catalyzes the GTP-dependent ribosomal translocation step during translation elongation. During this step, the ribosome changes from the pre-translocational (PRE) to the post-translocational (POST) state as the newly formed A-site-bound peptidyl-tRNA and P-site-bound deacylated tRNA move to the P and E sites, respectively. Catalyzes the coordinated movement of the two tRNA molecules, the mRNA and conformational changes in the ribosome. This Clostridium botulinum (strain Alaska E43 / Type E3) protein is Elongation factor G.